Consider the following 885-residue polypeptide: GPI ethanolamine phosphate transferase 2 (885 aa).

N-linked (GlcNAc...) asparagine glycans are attached at residues Asn82, Asn155, and Asn194. The helical transmembrane segment at Asp413–Asn433 threads the bilayer. Residue Asn443 is glycosylated (N-linked (GlcNAc...) asparagine). 3 consecutive transmembrane segments (helical) span residues Val447–Ile467, Ile473–Phe493, and Ser495–Ser514. Asn516 carries N-linked (GlcNAc...) asparagine glycosylation. The next 8 membrane-spanning stretches (helical) occupy residues Leu539–Gly559, Gly581–Leu601, Ile648–Ile668, Glu697–Tyr717, Tyr726–Gly746, Val768–Leu788, Ile820–Val840, and Ser865–Phe885.

It belongs to the PIGG/PIGN/PIGO family. PIGG subfamily.

The protein localises to the endoplasmic reticulum membrane. Its pathway is glycolipid biosynthesis; glycosylphosphatidylinositol-anchor biosynthesis. Functionally, ethanolamine phosphate transferase involved in glycosylphosphatidylinositol-anchor biosynthesis. Transfers ethanolamine phosphate to the GPI second mannose. The protein is GPI ethanolamine phosphate transferase 2 (GPI7) of Candida albicans (strain SC5314 / ATCC MYA-2876) (Yeast).